Here is an 849-residue protein sequence, read N- to C-terminus: Thrombospondin type-1 domain-containing protein 1 (849 aa).

The first 24 residues, 1 to 24, serve as a signal peptide directing secretion; sequence MKQTLKDFSNLLLVVLCDYVLGEA. Over 25-413 the chain is Extracellular; that stretch reads EHLVLGEPGH…QPQAPVKSNN (389 aa). Residues Asn39, Asn50, Asn55, Asn66, Asn77, Asn106, and Asn303 are each glycosylated (N-linked (GlcNAc...) asparagine). One can recognise a TSP type-1 domain in the interval 340–393; the sequence is IETWGLWQPWSQCSASCGDGVRERRRVCLTSSPSRPGCPGMSSETSPCSLEDCA. Disulfide bonds link Cys352–Cys387, Cys356–Cys392, and Cys367–Cys377. A helical transmembrane segment spans residues 414-434; that stretch reads VVTVTGISLCLFIIVATVLIT. The Cytoplasmic portion of the chain corresponds to 435 to 849; sequence LWRKLGRAPK…STLSVEKLVI (415 aa). Ser463 is subject to Phosphoserine. Disordered regions lie at residues 472-516, 595-799, and 828-849; these read SEPR…SESF, KSPF…KCQS, and GYFGSNEEDETTSTLSVEKLVI. A compositionally biased stretch (low complexity) spans 479–493; it reads SDAGDGPAGSPGDPG. The segment covering 636–651 has biased composition (basic residues); the sequence is SQVRSHSRGSHFRRTA. Residues 652-666 show a composition bias toward basic and acidic residues; sequence SFHEARQARPFRERS. Pro residues predominate over residues 720–732; the sequence is SPLPKPHSLGPPP.

Part of a complex composed of THSD1, PTK2/FAK1, TLN1 and VCL. Interacts with TLN1.

The protein resides in the endosome membrane. It localises to the cell junction. It is found in the focal adhesion. Is a positive regulator of nascent focal adhesion assembly, involved in the modulation of endothelial cell attachment to the extracellular matrix. This chain is Thrombospondin type-1 domain-containing protein 1 (THSD1), found in Bos taurus (Bovine).